The primary structure comprises 136 residues: Nucleoside diphosphate kinase (136 aa).

6 residues coordinate ATP: lysine 9, phenylalanine 57, arginine 85, threonine 91, arginine 102, and asparagine 112. Catalysis depends on histidine 115, which acts as the Pros-phosphohistidine intermediate.

This sequence belongs to the NDK family. Homotetramer. It depends on Mg(2+) as a cofactor.

The protein localises to the cytoplasm. It catalyses the reaction a 2'-deoxyribonucleoside 5'-diphosphate + ATP = a 2'-deoxyribonucleoside 5'-triphosphate + ADP. The enzyme catalyses a ribonucleoside 5'-diphosphate + ATP = a ribonucleoside 5'-triphosphate + ADP. In terms of biological role, major role in the synthesis of nucleoside triphosphates other than ATP. The ATP gamma phosphate is transferred to the NDP beta phosphate via a ping-pong mechanism, using a phosphorylated active-site intermediate. This chain is Nucleoside diphosphate kinase, found in Acetivibrio thermocellus (strain ATCC 27405 / DSM 1237 / JCM 9322 / NBRC 103400 / NCIMB 10682 / NRRL B-4536 / VPI 7372) (Clostridium thermocellum).